Here is a 412-residue protein sequence, read N- to C-terminus: cAMP-dependent protein kinase regulatory subunit (412 aa).

Polar residues predominate over residues 1–11 (MSNYSHSSNNP). A disordered region spans residues 1-146 (MSNYSHSSNN…TPPSHPKSEE (146 aa)). Residues 16–29 (STKEDKPSSFHKIA) are compositionally biased toward basic and acidic residues. Residues 23–159 (SSFHKIAEDE…RLKTAVSNNF (137 aa)) form a dimerization and phosphorylation region. 2 stretches are compositionally biased toward polar residues: residues 49–60 (NADNSAGGNNPL) and 119–138 (TSVS…SWTP). Residue serine 120 is modified to Phosphoserine. Residues 160–291 (LFSH…EEVP), glutamate 238, arginine 247, 292–405 (LLSS…TEYS), glutamate 359, and arginine 368 each bind 3',5'-cyclic AMP.

The protein belongs to the cAMP-dependent kinase regulatory chain family. Tetramer, composed of 2 regulatory (R) and 2 catalytic (C) subunits. In the presence of cAMP it dissociates into 2 active monomeric C subunits and an R dimer.

The chain is cAMP-dependent protein kinase regulatory subunit (pkaR) from Emericella nidulans (strain FGSC A4 / ATCC 38163 / CBS 112.46 / NRRL 194 / M139) (Aspergillus nidulans).